A 63-amino-acid chain; its full sequence is Synergistic-type venom protein C9S3, chain 1 (63 aa).

Cystine bridges form between C3-C24, C17-C42, and C46-C57.

Belongs to the three-finger toxin family. Short-chain subfamily. Aminergic toxin sub-subfamily. Heterodimer of C9S3 chain 1 and chain 2 (AC P01409); disulfide-linked. In terms of tissue distribution, expressed by the venom gland.

It is found in the secreted. Functionally, this protein shows a synergetic toxic effect in that it enhances the toxicity of other toxins. This Dendroaspis angusticeps (Eastern green mamba) protein is Synergistic-type venom protein C9S3, chain 1.